A 585-amino-acid polypeptide reads, in one-letter code: Neopullulanase 2 (585 aa).

N143, D145, N148, D149, G169, and D171 together coordinate Ca(2+). The substrate site is built by H244 and R323. The active-site Nucleophile is the D325. The active-site Proton donor is the E354. Residues 420–421 (HD), D465, and R469 contribute to the substrate site.

This sequence belongs to the glycosyl hydrolase 13 family. Monomer. The cofactor is Ca(2+).

The catalysed reaction is Hydrolysis of pullulan to panose (6-alpha-D-glucosylmaltose).. In terms of biological role, hydrolyzes pullulan efficiently but only a small amount of starch. Endohydrolysis of 1,4-alpha-glucosidic linkages in pullulan to form panose. Also cleaves (1-6)-alpha-glucosidic linkages to form maltotriose. This Thermoactinomyces vulgaris protein is Neopullulanase 2 (tvaII).